The following is a 678-amino-acid chain: Protein CASP (678 aa).

The Cytoplasmic portion of the chain corresponds to 1–619 (MAANVGSMSQ…LILSNKTART (619 aa)). Coiled coils occupy residues 16-40 (DLQQ…ESEQ), 67-374 (LLKS…TLKS), 427-454 (HLTE…TIQS), and 502-556 (LSII…FLQS). The residue at position 586 (S586) is a Phosphoserine. Residues 620-640 (IGFFYTLFLHCLVFLVLYKLA) traverse the membrane as a helical; Anchor for type IV membrane protein segment. The Lumenal segment spans residues 641-678 (WSESVERDCAATCAKKFADHLHKFHESDNGAAAGDLWQ).

It belongs to the CASP family. As to quaternary structure, homodimer; disulfide-linked. Interacts with GOLGA5. In terms of tissue distribution, ubiquitously expressed.

Its subcellular location is the golgi apparatus membrane. In terms of biological role, may be involved in intra-Golgi retrograde transport. This is Protein CASP (Cux1) from Mus musculus (Mouse).